Here is a 591-residue protein sequence, read N- to C-terminus: Aspartate--tRNA ligase (591 aa).

Glutamate 171 serves as a coordination point for L-aspartate. Positions 195–198 (QLFK) are aspartate. L-aspartate is bound at residue arginine 217. Residues 217-219 (RDE) and glutamine 226 contribute to the ATP site. An L-aspartate-binding site is contributed by histidine 448. Glutamate 482 contacts ATP. Arginine 489 provides a ligand contact to L-aspartate. ATP is bound at residue 534–537 (GLDR).

It belongs to the class-II aminoacyl-tRNA synthetase family. Type 1 subfamily. Homodimer.

The protein resides in the cytoplasm. It carries out the reaction tRNA(Asp) + L-aspartate + ATP = L-aspartyl-tRNA(Asp) + AMP + diphosphate. In terms of biological role, catalyzes the attachment of L-aspartate to tRNA(Asp) in a two-step reaction: L-aspartate is first activated by ATP to form Asp-AMP and then transferred to the acceptor end of tRNA(Asp). The chain is Aspartate--tRNA ligase from Aliivibrio salmonicida (strain LFI1238) (Vibrio salmonicida (strain LFI1238)).